The primary structure comprises 303 residues: tRNA-cytidine(32) 2-sulfurtransferase (303 aa).

A PP-loop motif motif is present at residues 49–54 (SGGKDS). [4Fe-4S] cluster-binding residues include Cys-124, Cys-127, and Cys-215.

It belongs to the TtcA family. In terms of assembly, homodimer. Mg(2+) is required as a cofactor. The cofactor is [4Fe-4S] cluster.

It is found in the cytoplasm. It carries out the reaction cytidine(32) in tRNA + S-sulfanyl-L-cysteinyl-[cysteine desulfurase] + AH2 + ATP = 2-thiocytidine(32) in tRNA + L-cysteinyl-[cysteine desulfurase] + A + AMP + diphosphate + H(+). Its pathway is tRNA modification. In terms of biological role, catalyzes the ATP-dependent 2-thiolation of cytidine in position 32 of tRNA, to form 2-thiocytidine (s(2)C32). The sulfur atoms are provided by the cysteine/cysteine desulfurase (IscS) system. The protein is tRNA-cytidine(32) 2-sulfurtransferase of Anaeromyxobacter sp. (strain Fw109-5).